The primary structure comprises 208 residues: ATP-dependent Clp protease proteolytic subunit (208 aa).

Residue serine 107 is the Nucleophile of the active site. Residue histidine 132 is part of the active site.

This sequence belongs to the peptidase S14 family. Fourteen ClpP subunits assemble into 2 heptameric rings which stack back to back to give a disk-like structure with a central cavity, resembling the structure of eukaryotic proteasomes.

Its subcellular location is the cytoplasm. It catalyses the reaction Hydrolysis of proteins to small peptides in the presence of ATP and magnesium. alpha-casein is the usual test substrate. In the absence of ATP, only oligopeptides shorter than five residues are hydrolyzed (such as succinyl-Leu-Tyr-|-NHMec, and Leu-Tyr-Leu-|-Tyr-Trp, in which cleavage of the -Tyr-|-Leu- and -Tyr-|-Trp bonds also occurs).. Cleaves peptides in various proteins in a process that requires ATP hydrolysis. Has a chymotrypsin-like activity. Plays a major role in the degradation of misfolded proteins. In Methylorubrum extorquens (strain CM4 / NCIMB 13688) (Methylobacterium extorquens), this protein is ATP-dependent Clp protease proteolytic subunit.